Here is a 409-residue protein sequence, read N- to C-terminus: L-cysteine:1D-myo-inositol 2-amino-2-deoxy-alpha-D-glucopyranoside ligase (409 aa).

Cys43 provides a ligand contact to Zn(2+). L-cysteinyl-5'-AMP-binding positions include 43–46 (CGIT), Thr58, and 81–83 (NVT). Residues 45 to 55 (ITPYDATHMGH) carry the 'HIGH' region motif. Positions 183 to 188 (ERGGDP) match the 'ERGGDP' region motif. Residue Trp224 participates in L-cysteinyl-5'-AMP binding. Cys228 contacts Zn(2+). 246-248 (GSD) provides a ligand contact to L-cysteinyl-5'-AMP. His253 is a Zn(2+) binding site. Residue Val280 coordinates L-cysteinyl-5'-AMP. The 'KMSKS' region motif lies at 286-290 (KMSKS).

Belongs to the class-I aminoacyl-tRNA synthetase family. MshC subfamily. As to quaternary structure, monomer. It depends on Zn(2+) as a cofactor.

It carries out the reaction 1D-myo-inositol 2-amino-2-deoxy-alpha-D-glucopyranoside + L-cysteine + ATP = 1D-myo-inositol 2-(L-cysteinylamino)-2-deoxy-alpha-D-glucopyranoside + AMP + diphosphate + H(+). Catalyzes the ATP-dependent condensation of GlcN-Ins and L-cysteine to form L-Cys-GlcN-Ins. The sequence is that of L-cysteine:1D-myo-inositol 2-amino-2-deoxy-alpha-D-glucopyranoside ligase from Streptomyces scabiei (strain 87.22).